We begin with the raw amino-acid sequence, 599 residues long: Kinesin light chain 2 (599 aa).

Residues 78 to 143 (ILALSSHLGA…KQHLLFMSQI (66 aa)) are a coiled coil. The segment covering 154–163 (EKGDVPKDSL) has biased composition (basic and acidic residues). The tract at residues 154–188 (EKGDVPKDSLDDLFPNEDEQSPAPSPGGGDVAAQH) is disordered. Phosphoserine occurs at positions 174 and 178. TPR repeat units lie at residues 197–230 (LRTL…LEKT), 239–272 (ATML…REKT), 281–314 (AATL…REKV), 323–356 (AKQL…YATR), and 365–398 (AKTK…AHEK). Ser-443 is modified (phosphoserine). One copy of the TPR 6 repeat lies at 447–480 (NTTLRTLGALYRPEGKLEAAHTLEDCASRSRKQG). The tract at residues 492–541 (LLKDGSGRGHRRGSRDVAGPQSESDLEESGPAAEWSGDGSGSLRRSGSFG) is disordered. Ser-505 and Ser-515 each carry phosphoserine. Residues 532–541 (GSLRRSGSFG) are compositionally biased toward low complexity. Phosphoserine occurs at positions 574, 575, and 582.

It belongs to the kinesin light chain family. Oligomeric complex composed of two heavy chains and two light chains. Interacts (via TPR repeats) with PLEKHM2.

Its subcellular location is the cytoplasm. It is found in the cytoskeleton. It localises to the lysosome membrane. Its function is as follows. Kinesin is a microtubule-associated force-producing protein that plays a role in organelle transport. The light chain functions in coupling of cargo to the heavy chain or in the modulation of its ATPase activity. Through binding with PLEKHM2 and ARL8B, recruits kinesin-1 to lysosomes and hence direct lysosomes movement toward microtubule plus ends. The chain is Kinesin light chain 2 from Mus musculus (Mouse).